The sequence spans 481 residues: Cysteine--tRNA ligase (481 aa).

Residue Cys29 coordinates Zn(2+). A 'HIGH' region motif is present at residues 31 to 41; that stretch reads PTTYDYIHLGN. Zn(2+) contacts are provided by Cys209, His234, and Glu238. The 'KMSKS' region motif lies at 267-271; the sequence is KMSKS. Lys270 contacts ATP.

The protein belongs to the class-I aminoacyl-tRNA synthetase family. As to quaternary structure, monomer. Requires Zn(2+) as cofactor.

The protein localises to the cytoplasm. The enzyme catalyses tRNA(Cys) + L-cysteine + ATP = L-cysteinyl-tRNA(Cys) + AMP + diphosphate. The polypeptide is Cysteine--tRNA ligase (Heliobacterium modesticaldum (strain ATCC 51547 / Ice1)).